We begin with the raw amino-acid sequence, 147 residues long: UPF0306 protein YhbP (147 aa).

It belongs to the UPF0306 family.

This is UPF0306 protein YhbP from Escherichia coli O157:H7.